A 190-amino-acid chain; its full sequence is MRYLTALFVLVASPALAAGDDAPKGLFNPSLGNTDFVVLLGFLLFLAILFYFGVPKMLGGMLDARAEGIRSELDEARALREEAQTLLASYERKAREVEEQSARIVTEARANAETAAEQAKADIERSITRRLAAAEDQIASAEAKASRAVRDTAASVAVAAAAEVIAGGTSATDQNKMIDEAIEEVGRQLH.

Residues 35–55 (DFVVLLGFLLFLAILFYFGVP) traverse the membrane as a helical segment.

It belongs to the ATPase B chain family. As to quaternary structure, F-type ATPases have 2 components, F(1) - the catalytic core - and F(0) - the membrane proton channel. F(1) has five subunits: alpha(3), beta(3), gamma(1), delta(1), epsilon(1). F(0) has three main subunits: a(1), b(2) and c(10-14). The alpha and beta chains form an alternating ring which encloses part of the gamma chain. F(1) is attached to F(0) by a central stalk formed by the gamma and epsilon chains, while a peripheral stalk is formed by the delta and b chains.

Its subcellular location is the cell inner membrane. F(1)F(0) ATP synthase produces ATP from ADP in the presence of a proton or sodium gradient. F-type ATPases consist of two structural domains, F(1) containing the extramembraneous catalytic core and F(0) containing the membrane proton channel, linked together by a central stalk and a peripheral stalk. During catalysis, ATP synthesis in the catalytic domain of F(1) is coupled via a rotary mechanism of the central stalk subunits to proton translocation. In terms of biological role, component of the F(0) channel, it forms part of the peripheral stalk, linking F(1) to F(0). This is ATP synthase subunit b 1 from Jannaschia sp. (strain CCS1).